The sequence spans 420 residues: CinA-like protein (420 aa).

It belongs to the CinA family.

The polypeptide is CinA-like protein (Chloroherpeton thalassium (strain ATCC 35110 / GB-78)).